A 231-amino-acid chain; its full sequence is ATP phosphoribosyltransferase (231 aa).

It belongs to the ATP phosphoribosyltransferase family. Short subfamily. In terms of assembly, heteromultimer composed of HisG and HisZ subunits.

The protein localises to the cytoplasm. The catalysed reaction is 1-(5-phospho-beta-D-ribosyl)-ATP + diphosphate = 5-phospho-alpha-D-ribose 1-diphosphate + ATP. The protein operates within amino-acid biosynthesis; L-histidine biosynthesis; L-histidine from 5-phospho-alpha-D-ribose 1-diphosphate: step 1/9. In terms of biological role, catalyzes the condensation of ATP and 5-phosphoribose 1-diphosphate to form N'-(5'-phosphoribosyl)-ATP (PR-ATP). Has a crucial role in the pathway because the rate of histidine biosynthesis seems to be controlled primarily by regulation of HisG enzymatic activity. The chain is ATP phosphoribosyltransferase from Brucella melitensis biotype 2 (strain ATCC 23457).